Consider the following 432-residue polypeptide: Glutamate-1-semialdehyde 2,1-aminomutase (432 aa).

Residue Lys-271 is modified to N6-(pyridoxal phosphate)lysine.

The protein belongs to the class-III pyridoxal-phosphate-dependent aminotransferase family. HemL subfamily. Homodimer. The cofactor is pyridoxal 5'-phosphate.

Its subcellular location is the cytoplasm. The enzyme catalyses (S)-4-amino-5-oxopentanoate = 5-aminolevulinate. It participates in porphyrin-containing compound metabolism; protoporphyrin-IX biosynthesis; 5-aminolevulinate from L-glutamyl-tRNA(Glu): step 2/2. The protein operates within porphyrin-containing compound metabolism; chlorophyll biosynthesis. The chain is Glutamate-1-semialdehyde 2,1-aminomutase from Prochlorococcus marinus (strain NATL2A).